The sequence spans 223 residues: Translation initiation factor 6 (223 aa).

It belongs to the eIF-6 family.

In terms of biological role, binds to the 50S ribosomal subunit and prevents its association with the 30S ribosomal subunit to form the 70S initiation complex. The sequence is that of Translation initiation factor 6 from Thermofilum pendens (strain DSM 2475 / Hrk 5).